The primary structure comprises 118 residues: MIKGIGLDMIDLERVKQVVEKNPRFIERVLTEKEIKQFEKYEGNRKIEFLAGRFAAKEAYAKANGTGFGKHLSFTDVEILQVEDGRPHVTLPVKSGENVFVSITHTARSAAAQVIIEI.

The Mg(2+) site is built by D8 and E58.

Belongs to the P-Pant transferase superfamily. AcpS family. Requires Mg(2+) as cofactor.

It localises to the cytoplasm. The catalysed reaction is apo-[ACP] + CoA = holo-[ACP] + adenosine 3',5'-bisphosphate + H(+). Its function is as follows. Transfers the 4'-phosphopantetheine moiety from coenzyme A to a Ser of acyl-carrier-protein. This chain is Holo-[acyl-carrier-protein] synthase, found in Listeria monocytogenes serotype 4b (strain CLIP80459).